The following is a 338-amino-acid chain: RNA 3'-terminal phosphate cyclase (338 aa).

ATP-binding positions include Gln-103 and 283–287 (YLADQ). The active-site Tele-AMP-histidine intermediate is the His-308.

This sequence belongs to the RNA 3'-terminal cyclase family. Type 1 subfamily.

It localises to the cytoplasm. It carries out the reaction a 3'-end 3'-phospho-ribonucleotide-RNA + ATP = a 3'-end 2',3'-cyclophospho-ribonucleotide-RNA + AMP + diphosphate. Functionally, catalyzes the conversion of 3'-phosphate to a 2',3'-cyclic phosphodiester at the end of RNA. The mechanism of action of the enzyme occurs in 3 steps: (A) adenylation of the enzyme by ATP; (B) transfer of adenylate to an RNA-N3'P to produce RNA-N3'PP5'A; (C) and attack of the adjacent 2'-hydroxyl on the 3'-phosphorus in the diester linkage to produce the cyclic end product. The biological role of this enzyme is unknown but it is likely to function in some aspects of cellular RNA processing. This is RNA 3'-terminal phosphate cyclase from Shigella sonnei (strain Ss046).